The chain runs to 417 residues: Cobalamin binding intrinsic factor (417 aa).

A signal peptide spans 1-22 (MAWFSLHLLHLLWAAAGTSTWA). Disulfide bonds link Cys-26/Cys-246, Cys-103/Cys-288, and Cys-143/Cys-182. The N-linked (GlcNAc...) asparagine glycan is linked to Asn-100. Residue Asp-171 coordinates cob(II)alamin. Position 191 is a phosphoserine (Ser-191). N-linked (GlcNAc...) asparagine glycosylation occurs at Asn-209. Residues Asp-222 and Gln-270 each contribute to the cob(II)alamin site. N-linked (GlcNAc...) asparagine glycans are attached at residues Asn-311 and Asn-330. Residues 365-370 (SWGLVV) and 386-395 (WQFLSGKTPL) contribute to the cob(II)alamin site. N-linked (GlcNAc...) asparagine glycosylation is present at Asn-413.

This sequence belongs to the eukaryotic cobalamin transport proteins family. In terms of assembly, interacts with CUBN (via CUB domains).

It is found in the secreted. Functionally, promotes absorption of the essential vitamin cobalamin (Cbl) in the ileum. After interaction with CUBN, the CBLIF-cobalamin complex is internalized via receptor-mediated endocytosis. This chain is Cobalamin binding intrinsic factor (CBLIF), found in Canis lupus familiaris (Dog).